A 549-amino-acid polypeptide reads, in one-letter code: Cation/acetate symporter ActP (549 aa).

The next 13 membrane-spanning stretches (helical) occupy residues 33 to 53 (WQAIIMFLIFVVFTLGITYWA), 77 to 97 (LAIAGDYMSAASFLGISALVF), 103 to 123 (GLIYSLGFLVGWPIILFLIAE), 148 to 168 (ILSACGSLVVVALYLIAQMVG), 183 to 203 (IAVVLVGVLMMMYVLFGGMLA), 206 to 226 (WVQIIKAVLLLFGASFMAFMV), 262 to 282 (ISALSLGLGLMFGTAGLPHIL), 303 to 323 (GFMGYFYILTFIIGFGAIMLV), 355 to 375 (LFLGFISAVAFATILAVVAGL), 404 to 424 (VSKITVLILGVIAIILGVLFE), 428 to 448 (IAFMVGLAFAIAASCNFPIIL), 464 to 484 (GGWLGLITAVVLMILGPTIWV), and 493 to 513 (IFPYEYPALFSISVAFLGIWF).

This sequence belongs to the sodium:solute symporter (SSF) (TC 2.A.21) family.

The protein localises to the cell inner membrane. Its function is as follows. Transports acetate. The sequence is that of Cation/acetate symporter ActP from Escherichia coli O6:K15:H31 (strain 536 / UPEC).